The chain runs to 171 residues: 3-hydroxydecanoyl-[acyl-carrier-protein] dehydratase (171 aa).

The active site involves H70.

This sequence belongs to the thioester dehydratase family. FabA subfamily. Homodimer.

It is found in the cytoplasm. The enzyme catalyses a (3R)-hydroxyacyl-[ACP] = a (2E)-enoyl-[ACP] + H2O. It catalyses the reaction (3R)-hydroxydecanoyl-[ACP] = (2E)-decenoyl-[ACP] + H2O. It carries out the reaction (2E)-decenoyl-[ACP] = (3Z)-decenoyl-[ACP]. It participates in lipid metabolism; fatty acid biosynthesis. Necessary for the introduction of cis unsaturation into fatty acids. Catalyzes the dehydration of (3R)-3-hydroxydecanoyl-ACP to E-(2)-decenoyl-ACP and then its isomerization to Z-(3)-decenoyl-ACP. Can catalyze the dehydratase reaction for beta-hydroxyacyl-ACPs with saturated chain lengths up to 16:0, being most active on intermediate chain length. In Shewanella oneidensis (strain ATCC 700550 / JCM 31522 / CIP 106686 / LMG 19005 / NCIMB 14063 / MR-1), this protein is 3-hydroxydecanoyl-[acyl-carrier-protein] dehydratase.